Reading from the N-terminus, the 480-residue chain is Lysosomal protective protein (480 aa).

The first 28 residues, 1-28 (MIRAAPPPLFLLLLLLLLLVSWASRGEA), serve as a signal peptide directing secretion. Disulfide bonds link cysteine 88–cysteine 362, cysteine 240–cysteine 256, cysteine 241–cysteine 246, and cysteine 281–cysteine 331. Asparagine 145 is a glycosylation site (N-linked (GlcNAc...) asparagine). Residue serine 178 is part of the active site. N-linked (GlcNAc...) asparagine glycosylation occurs at asparagine 333. Catalysis depends on residues aspartate 400 and histidine 457.

It belongs to the peptidase S10 family. In terms of assembly, heterodimer of a 32 kDa chain and a 20 kDa chain; disulfide-linked.

It localises to the lysosome. It carries out the reaction Release of a C-terminal amino acid with broad specificity.. In terms of biological role, protective protein appears to be essential for both the activity of beta-galactosidase and neuraminidase, it associates with these enzymes and exerts a protective function necessary for their stability and activity. This protein is also a carboxypeptidase and can deamidate tachykinins. In Homo sapiens (Human), this protein is Lysosomal protective protein (CTSA).